The sequence spans 203 residues: Glycerol-3-phosphate acyltransferase (203 aa).

The next 5 membrane-spanning stretches (helical) occupy residues 4 to 24 (IAPG…AILV), 56 to 76 (VAVL…AYML), 80 to 100 (PFWL…PVFF), 112 to 132 (FGAI…TWLL), and 138 to 158 (GYSS…VWWF).

Belongs to the PlsY family. Probably interacts with PlsX.

The protein resides in the cell inner membrane. It catalyses the reaction an acyl phosphate + sn-glycerol 3-phosphate = a 1-acyl-sn-glycero-3-phosphate + phosphate. Its pathway is lipid metabolism; phospholipid metabolism. Catalyzes the transfer of an acyl group from acyl-phosphate (acyl-PO(4)) to glycerol-3-phosphate (G3P) to form lysophosphatidic acid (LPA). This enzyme utilizes acyl-phosphate as fatty acyl donor, but not acyl-CoA or acyl-ACP. The polypeptide is Glycerol-3-phosphate acyltransferase (Enterobacter sp. (strain 638)).